Reading from the N-terminus, the 154-residue chain is Spermatogenesis-associated protein 19, mitochondrial (154 aa).

The transit peptide at 1-24 (MIITTWIMYIFARKTVGLPFPPRV) directs the protein to the mitochondrion. Phosphoserine occurs at positions 26 and 116.

Expressed specifically in adult testis (at protein level).

It is found in the mitochondrion outer membrane. Its subcellular location is the mitochondrion. The protein resides in the cell projection. The protein localises to the cilium. It localises to the flagellum. In terms of biological role, essential for sperm motility and male fertility. Plays an important role in sperm motility by regulating the organization and function of the mitochondria and is also required for correct sperm midpiece assembly. The polypeptide is Spermatogenesis-associated protein 19, mitochondrial (Spata19) (Mus musculus (Mouse)).